Here is a 166-residue protein sequence, read N- to C-terminus: NAD(P)H-quinone oxidoreductase subunit I, chloroplastic (166 aa).

4Fe-4S ferredoxin-type domains follow at residues 55-84 (GRIH…VDWK) and 95-124 (LNYS…MTEE). Residues Cys64, Cys67, Cys70, Cys74, Cys104, Cys107, Cys110, and Cys114 each coordinate [4Fe-4S] cluster.

The protein belongs to the complex I 23 kDa subunit family. As to quaternary structure, NDH is composed of at least 16 different subunits, 5 of which are encoded in the nucleus. [4Fe-4S] cluster is required as a cofactor.

It is found in the plastid. It localises to the chloroplast thylakoid membrane. It carries out the reaction a plastoquinone + NADH + (n+1) H(+)(in) = a plastoquinol + NAD(+) + n H(+)(out). The enzyme catalyses a plastoquinone + NADPH + (n+1) H(+)(in) = a plastoquinol + NADP(+) + n H(+)(out). NDH shuttles electrons from NAD(P)H:plastoquinone, via FMN and iron-sulfur (Fe-S) centers, to quinones in the photosynthetic chain and possibly in a chloroplast respiratory chain. The immediate electron acceptor for the enzyme in this species is believed to be plastoquinone. Couples the redox reaction to proton translocation, and thus conserves the redox energy in a proton gradient. This chain is NAD(P)H-quinone oxidoreductase subunit I, chloroplastic, found in Stevia rebaudiana (Stevia).